The following is a 471-amino-acid chain: MARCISFLSTSSSLPCATKPPCCSVSSVLPSSPSSHQCRGRKTSCGSIRALREDWRERSKAIPPGGVYPAKDHCSQCGLCDTYYIAHVKNACAFLGDGMSRVEDLEPLVHGRGRKQDMDEMYFGVYEQLLYARKMKPVEGAQWTGIVTTIAVEMLKANMVDAVVCVQSDPDDRLAPMPVLARTPDEVIAAKGVKPTLSPNLNTLALVEAAGVKRLLFCGVGCQVQALRSVEKYLGLEKLYVLGTNCVDNGTREGLDKFLKAASSEPETVLHYEFMQDYKVHLKHLDGHIEEVPYFCLPAKDLVDVIAPSCYSCFDYTNGLADLVVGYMGVPKYPGVSMTQHPQYITVRNDRGREMLSLVEGLLESTPTVSSGVRQPFVIETVKADDEAKQGRGPSQPAPTFVGNVIAFLLNLIGPKGLEFARYSLDYHTIRNYLHVNRAWGKQRAEQHIPSYAKKIVEAYDKDGRIESMLQ.

A chloroplast-targeting transit peptide spans methionine 1–serine 44.

It belongs to the FrhB family. FAD serves as cofactor. Iron-sulfur cluster is required as a cofactor.

Its subcellular location is the plastid. It localises to the chloroplast. The enzyme catalyses chlorophyll a + 2 oxidized [2Fe-2S]-[ferredoxin] + H2O = 7(1)-hydroxychlorophyll a + 2 reduced [2Fe-2S]-[ferredoxin] + 2 H(+). In terms of biological role, probable iron-sulfur flavoprotein that converts 7-hydroxymethyl chlorophyll a to chlorophyll a using ferredoxin as a reducing equivalent. Catalyzes the reduction of a hydroxymethyl group to a methyl group. This chain is 7-hydroxymethyl chlorophyll a reductase, chloroplastic (HCAR), found in Oryza sativa subsp. japonica (Rice).